Here is a 133-residue protein sequence, read N- to C-terminus: Small ribosomal subunit protein uS8 (133 aa).

The protein belongs to the universal ribosomal protein uS8 family. As to quaternary structure, part of the 30S ribosomal subunit. Contacts proteins S5 and S12.

Its function is as follows. One of the primary rRNA binding proteins, it binds directly to 16S rRNA central domain where it helps coordinate assembly of the platform of the 30S subunit. In Orientia tsutsugamushi (strain Boryong) (Rickettsia tsutsugamushi), this protein is Small ribosomal subunit protein uS8.